The sequence spans 77 residues: NEDD8-like protein RUB1 (77 aa).

The region spanning 1 to 74 is the Ubiquitin-like domain; that stretch reads MIVKVKTLTG…MQLHLVLTLR (74 aa). A Glycyl lysine isopeptide (Gly-Lys) (interchain with K-? in acceptor proteins) cross-link involves residue Gly-76. Residue Asn-77 is a propeptide.

As to quaternary structure, interacts with CDC53 and DCN1.

Its function is as follows. Ubiquitin-like protein modifier that can be covalently attached to lysine residues of target proteins. Activated by the dimeric UBA3-ULA1 E1 enzyme and conjugated by the E2 UBC12 to substrate proteins. RUB1-conjugated (neddylated) substrate proteins include the cullins CDC53, RTT101 and CUL3, and the modification enhances the ubiquitin-ligase activity of the corresponding cullin-RING-based E3 ubiquitin-protein ligase complexes (CRLs). This chain is NEDD8-like protein RUB1 (RUB1), found in Saccharomyces cerevisiae (strain ATCC 204508 / S288c) (Baker's yeast).